Reading from the N-terminus, the 283-residue chain is Pantothenate synthetase (283 aa).

31–38 (MGALHDGH) lines the ATP pocket. Residue H38 is the Proton donor of the active site. Q62 contacts (R)-pantoate. A beta-alanine-binding site is contributed by Q62. 148–151 (GKKD) is a binding site for ATP. Q154 provides a ligand contact to (R)-pantoate. Residues V177 and 185-188 (KSSR) contribute to the ATP site.

The protein belongs to the pantothenate synthetase family. Homodimer.

It is found in the cytoplasm. The enzyme catalyses (R)-pantoate + beta-alanine + ATP = (R)-pantothenate + AMP + diphosphate + H(+). The protein operates within cofactor biosynthesis; (R)-pantothenate biosynthesis; (R)-pantothenate from (R)-pantoate and beta-alanine: step 1/1. Catalyzes the condensation of pantoate with beta-alanine in an ATP-dependent reaction via a pantoyl-adenylate intermediate. The sequence is that of Pantothenate synthetase from Staphylococcus aureus (strain USA300).